A 478-amino-acid chain; its full sequence is Protein nucleotidyltransferase YdiU (478 aa).

ATP contacts are provided by G84, G86, R87, K107, D119, G120, R170, and R177. The Proton acceptor role is filled by D246. Positions 247 and 256 each coordinate Mg(2+). D256 is an ATP binding site.

It belongs to the SELO family. Mg(2+) is required as a cofactor. Mn(2+) serves as cofactor.

It carries out the reaction L-seryl-[protein] + ATP = 3-O-(5'-adenylyl)-L-seryl-[protein] + diphosphate. The catalysed reaction is L-threonyl-[protein] + ATP = 3-O-(5'-adenylyl)-L-threonyl-[protein] + diphosphate. It catalyses the reaction L-tyrosyl-[protein] + ATP = O-(5'-adenylyl)-L-tyrosyl-[protein] + diphosphate. The enzyme catalyses L-histidyl-[protein] + UTP = N(tele)-(5'-uridylyl)-L-histidyl-[protein] + diphosphate. It carries out the reaction L-seryl-[protein] + UTP = O-(5'-uridylyl)-L-seryl-[protein] + diphosphate. The catalysed reaction is L-tyrosyl-[protein] + UTP = O-(5'-uridylyl)-L-tyrosyl-[protein] + diphosphate. Nucleotidyltransferase involved in the post-translational modification of proteins. It can catalyze the addition of adenosine monophosphate (AMP) or uridine monophosphate (UMP) to a protein, resulting in modifications known as AMPylation and UMPylation. The protein is Protein nucleotidyltransferase YdiU of Escherichia coli O157:H7.